The sequence spans 602 residues: Aspartate--tRNA(Asp/Asn) ligase (602 aa).

Position 176 (glutamate 176) interacts with L-aspartate. The segment at 200–203 (QQFK) is aspartate. Residues arginine 222 and histidine 452 each contribute to the L-aspartate site. Position 222-224 (222-224 (RDE)) interacts with ATP. Glutamate 490 serves as a coordination point for ATP. Arginine 497 is a binding site for L-aspartate. 542–545 (GIDR) contacts ATP.

Belongs to the class-II aminoacyl-tRNA synthetase family. Type 1 subfamily. In terms of assembly, homodimer.

It localises to the cytoplasm. The catalysed reaction is tRNA(Asx) + L-aspartate + ATP = L-aspartyl-tRNA(Asx) + AMP + diphosphate. Functionally, aspartyl-tRNA synthetase with relaxed tRNA specificity since it is able to aspartylate not only its cognate tRNA(Asp) but also tRNA(Asn). Reaction proceeds in two steps: L-aspartate is first activated by ATP to form Asp-AMP and then transferred to the acceptor end of tRNA(Asp/Asn). The polypeptide is Aspartate--tRNA(Asp/Asn) ligase (Rickettsia akari (strain Hartford)).